The primary structure comprises 223 residues: Triosephosphate isomerase (223 aa).

10–12 contributes to the substrate binding site; the sequence is NFK. Histidine 94 functions as the Electrophile in the catalytic mechanism. Glutamate 142 serves as the catalytic Proton acceptor. Residues isoleucine 147, glycine 182, and 203 to 204 each bind substrate; that span reads AS.

It belongs to the triosephosphate isomerase family. As to quaternary structure, homotetramer; dimer of dimers.

It is found in the cytoplasm. It carries out the reaction D-glyceraldehyde 3-phosphate = dihydroxyacetone phosphate. It functions in the pathway carbohydrate biosynthesis; gluconeogenesis. The protein operates within carbohydrate degradation; glycolysis; D-glyceraldehyde 3-phosphate from glycerone phosphate: step 1/1. Involved in the gluconeogenesis. Catalyzes stereospecifically the conversion of dihydroxyacetone phosphate (DHAP) to D-glyceraldehyde-3-phosphate (G3P). The chain is Triosephosphate isomerase from Archaeoglobus fulgidus (strain ATCC 49558 / DSM 4304 / JCM 9628 / NBRC 100126 / VC-16).